The sequence spans 277 residues: Large ribosomal subunit protein uL2c (277 aa).

Residues 225-277 form a disordered region; the sequence is MNPCDHPHGGGEGRSPIGRPKPVTPWGKPALGKKTRSPKRFSNKYIIRSRKMV. Positions 255–277 are enriched in basic residues; that stretch reads LGKKTRSPKRFSNKYIIRSRKMV.

Belongs to the universal ribosomal protein uL2 family. As to quaternary structure, part of the 50S ribosomal subunit.

It is found in the plastid. Its subcellular location is the chloroplast. The sequence is that of Large ribosomal subunit protein uL2c (rpl2) from Euglena gracilis.